Consider the following 156-residue polypeptide: UPF0336 protein SACE_6876 (156 aa).

Residues 8–128 (IGREYPPTPA…DFLTVRAEIT (121 aa)) enclose the MaoC-like domain.

Belongs to the UPF0336 family.

This chain is UPF0336 protein SACE_6876, found in Saccharopolyspora erythraea (strain ATCC 11635 / DSM 40517 / JCM 4748 / NBRC 13426 / NCIMB 8594 / NRRL 2338).